The sequence spans 227 residues: Ribosomal RNA large subunit methyltransferase E (227 aa).

5 residues coordinate S-adenosyl-L-methionine: Gly-78, Trp-80, Asp-103, Asp-119, and Asp-143. The active-site Proton acceptor is the Lys-183.

Belongs to the class I-like SAM-binding methyltransferase superfamily. RNA methyltransferase RlmE family.

The protein localises to the cytoplasm. It carries out the reaction uridine(2552) in 23S rRNA + S-adenosyl-L-methionine = 2'-O-methyluridine(2552) in 23S rRNA + S-adenosyl-L-homocysteine + H(+). Its function is as follows. Specifically methylates the uridine in position 2552 of 23S rRNA at the 2'-O position of the ribose in the fully assembled 50S ribosomal subunit. In Rickettsia africae (strain ESF-5), this protein is Ribosomal RNA large subunit methyltransferase E.